The primary structure comprises 244 residues: Ribosomal RNA large subunit methyltransferase E (244 aa).

Positions 81, 83, 109, 125, and 149 each coordinate S-adenosyl-L-methionine. Residue Lys189 is the Proton acceptor of the active site.

It belongs to the class I-like SAM-binding methyltransferase superfamily. RNA methyltransferase RlmE family.

It localises to the cytoplasm. The catalysed reaction is uridine(2552) in 23S rRNA + S-adenosyl-L-methionine = 2'-O-methyluridine(2552) in 23S rRNA + S-adenosyl-L-homocysteine + H(+). In terms of biological role, specifically methylates the uridine in position 2552 of 23S rRNA at the 2'-O position of the ribose in the fully assembled 50S ribosomal subunit. This is Ribosomal RNA large subunit methyltransferase E from Cereibacter sphaeroides (strain ATCC 17029 / ATH 2.4.9) (Rhodobacter sphaeroides).